The sequence spans 219 residues: 2-hydroxy-3-keto-5-methylthiopentenyl-1-phosphate phosphatase (219 aa).

Belongs to the HAD-like hydrolase superfamily. MtnX family.

The enzyme catalyses 2-hydroxy-5-methylsulfanyl-3-oxopent-1-enyl phosphate + H2O = 1,2-dihydroxy-5-(methylsulfanyl)pent-1-en-3-one + phosphate. It functions in the pathway amino-acid biosynthesis; L-methionine biosynthesis via salvage pathway; L-methionine from S-methyl-5-thio-alpha-D-ribose 1-phosphate: step 4/6. Its function is as follows. Dephosphorylates 2-hydroxy-3-keto-5-methylthiopentenyl-1-phosphate (HK-MTPenyl-1-P) yielding 1,2-dihydroxy-3-keto-5-methylthiopentene (DHK-MTPene). In Bacillus anthracis (strain A0248), this protein is 2-hydroxy-3-keto-5-methylthiopentenyl-1-phosphate phosphatase.